The following is a 541-amino-acid chain: MSKQIEFNETARRAMEAGVDKLADAVKVTLGPRGRHVVLAKSWGGPTVTNDGVTIAREIDLEDPFENLGAQLVKSVATKTNDVAGDGTTTATVLAQALVKAGLRNVAAGANPIALGAGIAKAADAVSEALLASATPVKDAKSIGQVATVSSRDELVGELVGEAMTKVGTDGVVTVEESSTLNTELEVTEGVGFDKGFISAYFVTDFDSQEAVLEDALVLLHREKISSLPDLLPLLEKVAEAGKPLLIVAEDVEGEALSTLVVNAIRKTLKAVAVKAPFFGDRRKAFLDDLAVVTGGQVVNPDVGLVLREVGLEVLGTARRVVVDKDSTVIVDGGGTQDAIEGRKGQLRAEIEVSDSDWDREKLEERLAKLAGGVAVIKVGAATETDLKKRKEAVEDAVAAAKAAVEEGIVIGGGAALVHAGSALDSLRSELKGDELLGVEVFASALSSPLYWIATNAGLDGAVVVNKVSELPAGQGFNAATLEYGDLIGDGVIDPVKVTRSAVVNAASVARMVLTTETAVVEKPAEAEDDGHGHGHGHHHH.

ATP contacts are provided by residues 29–32 (TLGP), 86–90 (DGTTT), G413, 478–480 (NAA), and D494. Residues 520–541 (VVEKPAEAEDDGHGHGHGHHHH) are disordered. The segment covering 523 to 533 (KPAEAEDDGHG) has biased composition (basic and acidic residues).

The protein belongs to the chaperonin (HSP60) family. As to quaternary structure, forms a cylinder of 14 subunits composed of two heptameric rings stacked back-to-back. Interacts with the co-chaperonin GroES.

The protein resides in the cytoplasm. The catalysed reaction is ATP + H2O + a folded polypeptide = ADP + phosphate + an unfolded polypeptide.. Its function is as follows. Together with its co-chaperonin GroES, plays an essential role in assisting protein folding. The GroEL-GroES system forms a nano-cage that allows encapsulation of the non-native substrate proteins and provides a physical environment optimized to promote and accelerate protein folding. This is Chaperonin GroEL 1 from Mycolicibacterium gilvum (strain PYR-GCK) (Mycobacterium gilvum (strain PYR-GCK)).